The chain runs to 165 residues: uncharacterized protein (165 aa).

Residues 1 to 36 (MTRLCLPRPEAREDPIPVPPRGLGAGEGSGSPVRPP) form a disordered region. Residues 135–155 (LLLLMGLGPLLRACGMPLTLL) form a helical membrane-spanning segment.

The protein localises to the membrane. This is an uncharacterized protein from Homo sapiens (Human).